The following is a 244-amino-acid chain: Acidic leucine-rich nuclear phosphoprotein 32 family member A (244 aa).

4 LRR repeats span residues 18-41 (DVKE…TDEF), 43-64 (GLEF…PKLN), 65-87 (KLKK…AEKC), and 89-110 (NLTH…EPLK). Positions 123–161 (CEVTNLNDYRENLFKLLPQLTYLDGYDRDDKEAPDSDAE) constitute an LRRCT domain. The tract at residues 148–244 (YDRDDKEAPD…DQDDEGEDDD (97 aa)) is disordered. Positions 157–227 (DSDAEGYVEG…EEDEGDEEAE (71 aa)) are enriched in acidic residues.

This sequence belongs to the ANP32 family. In terms of processing, phosphorylated on serine residues.

It is found in the nucleus. The protein resides in the cytoplasm. Its subcellular location is the endoplasmic reticulum. Functionally, implicated in a number of cellular processes, including proliferation, differentiation, caspase-dependent and caspase-independent apoptosis, suppression of transformation (tumor suppressor), inhibition of protein phosphatase 2A, regulation of mRNA trafficking and stability, and inhibition of acetyltransferases as part of the INHAT (inhibitor of histone acetyltransferases) complex. This Xenopus laevis (African clawed frog) protein is Acidic leucine-rich nuclear phosphoprotein 32 family member A (anp32a).